The following is a 249-amino-acid chain: MSGHSKWATTKHKKAVIDAKRGKMFAKLIKNVEVAARTGGGDPAGNPTLYDAIQKAKKNSVPNDNIDRAVKRGSGLEAGGADYQTVMYEGYGPNGVALLIECLTDNRNRAATEVRTALTRNGGSFADAGSVSYLFSRKGVVIVAKAGTTEDDVMLAVLDAGAEEVNDLGESFEVLSEPGDLVAVRTALQDAGIEYESAESSLVPSVSVPLDEDGARKILKLIDVLEDSDDVQNVYANFDVSDEMLARLG.

Belongs to the TACO1 family.

The protein localises to the cytoplasm. This chain is Probable transcriptional regulatory protein Sare_1779, found in Salinispora arenicola (strain CNS-205).